Reading from the N-terminus, the 382-residue chain is Queuine tRNA-ribosyltransferase (382 aa).

D96 (proton acceptor) is an active-site residue. Substrate contacts are provided by residues 96-100, D151, Q194, and G221; that span reads DSGGF. The tract at residues 252–258 is RNA binding; that stretch reads GVGAPDS. D271 functions as the Nucleophile in the catalytic mechanism. The segment at 276 to 280 is RNA binding; important for wobble base 34 recognition; that stretch reads TRIAR. C309, C311, C314, and H340 together coordinate Zn(2+).

The protein belongs to the queuine tRNA-ribosyltransferase family. In terms of assembly, homodimer. Within each dimer, one monomer is responsible for RNA recognition and catalysis, while the other monomer binds to the replacement base PreQ1. It depends on Zn(2+) as a cofactor.

It catalyses the reaction 7-aminomethyl-7-carbaguanine + guanosine(34) in tRNA = 7-aminomethyl-7-carbaguanosine(34) in tRNA + guanine. It functions in the pathway tRNA modification; tRNA-queuosine biosynthesis. Its function is as follows. Catalyzes the base-exchange of a guanine (G) residue with the queuine precursor 7-aminomethyl-7-deazaguanine (PreQ1) at position 34 (anticodon wobble position) in tRNAs with GU(N) anticodons (tRNA-Asp, -Asn, -His and -Tyr). Catalysis occurs through a double-displacement mechanism. The nucleophile active site attacks the C1' of nucleotide 34 to detach the guanine base from the RNA, forming a covalent enzyme-RNA intermediate. The proton acceptor active site deprotonates the incoming PreQ1, allowing a nucleophilic attack on the C1' of the ribose to form the product. After dissociation, two additional enzymatic reactions on the tRNA convert PreQ1 to queuine (Q), resulting in the hypermodified nucleoside queuosine (7-(((4,5-cis-dihydroxy-2-cyclopenten-1-yl)amino)methyl)-7-deazaguanosine). This chain is Queuine tRNA-ribosyltransferase, found in Lactococcus lactis subsp. cremoris (strain SK11).